We begin with the raw amino-acid sequence, 401 residues long: MSNYNLPDDNGHFDKYGGIFIAETLMTAVFELKDAYARFKNDSKFICEFEQDLKHYAGRETPLYYAKNLSKKLRGAQIYLKREDLNHTGSHKINNTIGQALLAKRMGKTRIIAETGAGQHGVATATVAARLGLECVVYMGEVDVARQSLNVFRMKLLGAKVIPVTSGSKTLKDSLNEAMRDWVKNIDDTFYIIGTIAGPHPYPMMVRDFQSIIGKEAKAQFHDQVGGLPDALVACVGGGSNAIGLFYAFIDNVSVEIYGVEAAGHGLEKGPSAHAAPLCAGNVGVLHGNRTYLMGDENGQIIEGHSIAAGLDYPGVGPEHAYLKDSGRAQYMAITDKEALEAFHILTKIEGILPALESSHAVAYGIKLAKKLGKNKSIIINLSGRGDKDIHTIAQIEGIEC.

At lysine 92 the chain carries N6-(pyridoxal phosphate)lysine.

It belongs to the TrpB family. Tetramer of two alpha and two beta chains. Pyridoxal 5'-phosphate serves as cofactor.

It catalyses the reaction (1S,2R)-1-C-(indol-3-yl)glycerol 3-phosphate + L-serine = D-glyceraldehyde 3-phosphate + L-tryptophan + H2O. The protein operates within amino-acid biosynthesis; L-tryptophan biosynthesis; L-tryptophan from chorismate: step 5/5. Its function is as follows. The beta subunit is responsible for the synthesis of L-tryptophan from indole and L-serine. This Vesicomyosocius okutanii subsp. Calyptogena okutanii (strain HA) protein is Tryptophan synthase beta chain.